Reading from the N-terminus, the 204-residue chain is Ribonuclease HII (204 aa).

The 197-residue stretch at 1-197 folds into the RNase H type-2 domain; that stretch reads MILGIDEAGR…KNCILNPKLL (197 aa). D6, E7, and D103 together coordinate a divalent metal cation.

The protein belongs to the RNase HII family. Mn(2+) serves as cofactor. Mg(2+) is required as a cofactor.

The protein resides in the cytoplasm. It catalyses the reaction Endonucleolytic cleavage to 5'-phosphomonoester.. Functionally, endonuclease that specifically degrades the RNA of RNA-DNA hybrids. The polypeptide is Ribonuclease HII (Helicobacter pylori (strain P12)).